The sequence spans 485 residues: Maturase K (485 aa).

The protein belongs to the intron maturase 2 family. MatK subfamily.

Its subcellular location is the plastid. It is found in the chloroplast. Usually encoded in the trnK tRNA gene intron. Probably assists in splicing its own and other chloroplast group II introns. The chain is Maturase K from Malus domestica (Apple).